The sequence spans 378 residues: Beta sliding clamp (378 aa).

It belongs to the beta sliding clamp family. Forms a ring-shaped head-to-tail homodimer around DNA which binds and tethers DNA polymerases and other proteins to the DNA. The DNA replisome complex has a single clamp-loading complex (3 tau and 1 each of delta, delta', psi and chi subunits) which binds 3 Pol III cores (1 core on the leading strand and 2 on the lagging strand) each with a beta sliding clamp dimer. Additional proteins in the replisome are other copies of gamma, psi and chi, Ssb, DNA helicase and RNA primase.

Its subcellular location is the cytoplasm. Its function is as follows. Confers DNA tethering and processivity to DNA polymerases and other proteins. Acts as a clamp, forming a ring around DNA (a reaction catalyzed by the clamp-loading complex) which diffuses in an ATP-independent manner freely and bidirectionally along dsDNA. Initially characterized for its ability to contact the catalytic subunit of DNA polymerase III (Pol III), a complex, multichain enzyme responsible for most of the replicative synthesis in bacteria; Pol III exhibits 3'-5' exonuclease proofreading activity. The beta chain is required for initiation of replication as well as for processivity of DNA replication. The protein is Beta sliding clamp (dnaN) of Streptococcus pneumoniae serotype 4 (strain ATCC BAA-334 / TIGR4).